The chain runs to 425 residues: Tol-Pal system protein TolB (425 aa).

An N-terminal signal peptide occupies residues 1–22; it reads MRNFLYCTGVLLLLWMSTSSQA.

This sequence belongs to the TolB family. In terms of assembly, the Tol-Pal system is composed of five core proteins: the inner membrane proteins TolA, TolQ and TolR, the periplasmic protein TolB and the outer membrane protein Pal. They form a network linking the inner and outer membranes and the peptidoglycan layer.

Its subcellular location is the periplasm. In terms of biological role, part of the Tol-Pal system, which plays a role in outer membrane invagination during cell division and is important for maintaining outer membrane integrity. The polypeptide is Tol-Pal system protein TolB (Nitrosomonas europaea (strain ATCC 19718 / CIP 103999 / KCTC 2705 / NBRC 14298)).